A 242-amino-acid polypeptide reads, in one-letter code: Octanoyltransferase (242 aa).

Positions 31–206 (SQTTDEIWFL…LFLKNFGYNQ (176 aa)) constitute a BPL/LPL catalytic domain. Substrate-binding positions include 70-77 (RGGQVTYH), 137-139 (SIG), and 150-152 (GLA). The active-site Acyl-thioester intermediate is Cys-168.

Belongs to the LipB family.

It localises to the cytoplasm. The catalysed reaction is octanoyl-[ACP] + L-lysyl-[protein] = N(6)-octanoyl-L-lysyl-[protein] + holo-[ACP] + H(+). The protein operates within protein modification; protein lipoylation via endogenous pathway; protein N(6)-(lipoyl)lysine from octanoyl-[acyl-carrier-protein]: step 1/2. Its function is as follows. Catalyzes the transfer of endogenously produced octanoic acid from octanoyl-acyl-carrier-protein onto the lipoyl domains of lipoate-dependent enzymes. Lipoyl-ACP can also act as a substrate although octanoyl-ACP is likely to be the physiological substrate. The chain is Octanoyltransferase from Coxiella burnetii (strain RSA 493 / Nine Mile phase I).